Reading from the N-terminus, the 363-residue chain is tRNA/tmRNA (uracil-C(5))-methyltransferase (363 aa).

5 residues coordinate S-adenosyl-L-methionine: Gln187, Tyr215, Asn220, Glu236, and Asp296. The Nucleophile role is filled by Cys321. The active-site Proton acceptor is Glu355.

This sequence belongs to the class I-like SAM-binding methyltransferase superfamily. RNA M5U methyltransferase family. TrmA subfamily.

It catalyses the reaction uridine(54) in tRNA + S-adenosyl-L-methionine = 5-methyluridine(54) in tRNA + S-adenosyl-L-homocysteine + H(+). The enzyme catalyses uridine(341) in tmRNA + S-adenosyl-L-methionine = 5-methyluridine(341) in tmRNA + S-adenosyl-L-homocysteine + H(+). In terms of biological role, dual-specificity methyltransferase that catalyzes the formation of 5-methyluridine at position 54 (m5U54) in all tRNAs, and that of position 341 (m5U341) in tmRNA (transfer-mRNA). The polypeptide is tRNA/tmRNA (uracil-C(5))-methyltransferase (Haemophilus influenzae (strain PittEE)).